Reading from the N-terminus, the 240-residue chain is Vesicle-associated membrane protein 727 (240 aa).

The Cytoplasmic segment spans residues 1–215 (MSQKGLIYSF…MWLQSLQMKL (215 aa)). One can recognise a Longin domain in the interval 6–133 (LIYSFVAKGT…NLDREFGPIL (128 aa)). Residues 149–209 (KLSKLKAQIT…RQLRRKMWLQ (61 aa)) enclose the v-SNARE coiled-coil homology domain. The chain crosses the membrane as a helical; Anchor for type IV membrane protein span at residues 216–236 (MVAGAVFSFILIVWVVACGGF). Residues 237 to 240 (KCSS) lie on the Vesicular side of the membrane.

This sequence belongs to the synaptobrevin family. In terms of assembly, interacts with subunits of the class C core vacuole/endosome tethering (CORVET) complex including VPS11, VCL1, VPS18, VPS33, VPS3 and VPS8. Highly expressed in flowers. Detected in leaves, stems and roots.

The protein localises to the early endosome membrane. It is found in the endosome membrane. Involved in the targeting and/or fusion of transport vesicles to their target membrane. The sequence is that of Vesicle-associated membrane protein 727 (VAMP727) from Arabidopsis thaliana (Mouse-ear cress).